A 362-amino-acid polypeptide reads, in one-letter code: Aminomethyltransferase (362 aa).

It belongs to the GcvT family. In terms of assembly, the glycine cleavage system is composed of four proteins: P, T, L and H.

It carries out the reaction N(6)-[(R)-S(8)-aminomethyldihydrolipoyl]-L-lysyl-[protein] + (6S)-5,6,7,8-tetrahydrofolate = N(6)-[(R)-dihydrolipoyl]-L-lysyl-[protein] + (6R)-5,10-methylene-5,6,7,8-tetrahydrofolate + NH4(+). Functionally, the glycine cleavage system catalyzes the degradation of glycine. The sequence is that of Aminomethyltransferase from Colwellia psychrerythraea (strain 34H / ATCC BAA-681) (Vibrio psychroerythus).